The following is a 343-amino-acid chain: CRISPR-associated endonuclease Cas1 1 (343 aa).

Mn(2+) contacts are provided by Glu-166, His-234, and Glu-249.

The protein belongs to the CRISPR-associated endonuclease Cas1 family. In terms of assembly, homodimer, forms a heterotetramer with a Cas2 homodimer. Requires Mg(2+) as cofactor. Mn(2+) is required as a cofactor.

In terms of biological role, CRISPR (clustered regularly interspaced short palindromic repeat), is an adaptive immune system that provides protection against mobile genetic elements (viruses, transposable elements and conjugative plasmids). CRISPR clusters contain spacers, sequences complementary to antecedent mobile elements, and target invading nucleic acids. CRISPR clusters are transcribed and processed into CRISPR RNA (crRNA). Acts as a dsDNA endonuclease. Involved in the integration of spacer DNA into the CRISPR cassette. The polypeptide is CRISPR-associated endonuclease Cas1 1 (Moorella thermoacetica (strain ATCC 39073 / JCM 9320)).